The sequence spans 93 residues: Alpha-defensin 16 (93 aa).

The N-terminal stretch at 1–19 is a signal peptide; the sequence is MKTLILLSALVLLAFQVQA. Residues 20 to 58 constitute a propeptide that is removed on maturation; that stretch reads DPIQNTDEETKTEEQPGEEDQAVSVSFGDPEGTSLQEES. The disordered stretch occupies residues 22–54; the sequence is IQNTDEETKTEEQPGEEDQAVSVSFGDPEGTSL. 3 disulfide bridges follow: cysteine 64–cysteine 92, cysteine 66–cysteine 81, and cysteine 71–cysteine 91.

This sequence belongs to the alpha-defensin family. In terms of tissue distribution, paneth cells of the small bowel.

It localises to the secreted. Functionally, probably contributes to the antimicrobial barrier function of the small bowel mucosa. This Mus musculus (Mouse) protein is Alpha-defensin 16 (Defa16).